Reading from the N-terminus, the 134-residue chain is Cytochrome b (134 aa).

3 helical membrane-spanning segments follow: residues 33–53 (FGSLLGVCLAVQILTGVFLAM), 77–98 (WVLRYLHANGASMFFICLYVHV), and 113–133 (WNVGILLLFAVMATAFMGYVL). Heme b is bound by residues histidine 83 and histidine 97.

It belongs to the cytochrome b family. The cytochrome bc1 complex contains 11 subunits: 3 respiratory subunits (MT-CYB, CYC1 and UQCRFS1), 2 core proteins (UQCRC1 and UQCRC2) and 6 low-molecular weight proteins (UQCRH/QCR6, UQCRB/QCR7, UQCRQ/QCR8, UQCR10/QCR9, UQCR11/QCR10 and a cleavage product of UQCRFS1). This cytochrome bc1 complex then forms a dimer. Heme b serves as cofactor.

The protein localises to the mitochondrion inner membrane. In terms of biological role, component of the ubiquinol-cytochrome c reductase complex (complex III or cytochrome b-c1 complex) that is part of the mitochondrial respiratory chain. The b-c1 complex mediates electron transfer from ubiquinol to cytochrome c. Contributes to the generation of a proton gradient across the mitochondrial membrane that is then used for ATP synthesis. This is Cytochrome b (MT-CYB) from Anoura caudifer (Hairy-legged long-tongued bat).